Reading from the N-terminus, the 288-residue chain is 4-diphosphocytidyl-2-C-methyl-D-erythritol kinase (288 aa).

Lysine 13 is an active-site residue. Residue 96-106 (PIGGGIGGGSS) coordinates ATP. The active site involves aspartate 138.

This sequence belongs to the GHMP kinase family. IspE subfamily.

The catalysed reaction is 4-CDP-2-C-methyl-D-erythritol + ATP = 4-CDP-2-C-methyl-D-erythritol 2-phosphate + ADP + H(+). It functions in the pathway isoprenoid biosynthesis; isopentenyl diphosphate biosynthesis via DXP pathway; isopentenyl diphosphate from 1-deoxy-D-xylulose 5-phosphate: step 3/6. Its function is as follows. Catalyzes the phosphorylation of the position 2 hydroxy group of 4-diphosphocytidyl-2C-methyl-D-erythritol. This Aliivibrio salmonicida (strain LFI1238) (Vibrio salmonicida (strain LFI1238)) protein is 4-diphosphocytidyl-2-C-methyl-D-erythritol kinase.